Reading from the N-terminus, the 319-residue chain is Transcription elongation factor A protein 1 (319 aa).

The TFIIS N-terminal domain occupies 1–78; that stretch reads MQEIIKCREQ…DKWKQDIEGT (78 aa). Over residues 78–106 the composition is skewed to low complexity; it reads TSATTTSSSSSSSSSTTSTTTTKTASPSE. The segment at 78–146 is disordered; it reads TSATTTSSSS…TTPKTSSPPI (69 aa). Residues 107-122 are compositionally biased toward basic and acidic residues; that stretch reads SLKRKSISEDTSDRPT. Residues 133 to 146 are compositionally biased toward low complexity; that stretch reads ISPPTTPKTSSPPI. A TFIIS central domain is found at 160–272; sequence LRNKTIQLFV…ASMLGQNNEA (113 aa). The segment at 275 to 317 adopts a TFIIS-type zinc-finger fold; sequence DQFQCGKCKQRKCTYTQLQTRSADEPPTTFVKCCVKGCGNRWR. Residues Cys-279, Cys-282, Cys-307, and Cys-312 each coordinate Zn(2+).

This sequence belongs to the TFS-II family.

It is found in the nucleus. Necessary for efficient RNA polymerase II transcription elongation past template-encoded arresting sites. The arresting sites in DNA have the property of trapping a certain fraction of elongating RNA polymerases that pass through, resulting in locked ternary complexes. Cleavage of the nascent transcript by S-II allows the resumption of elongation from the new 3'-terminus. The polypeptide is Transcription elongation factor A protein 1 (tcea1) (Dictyostelium discoideum (Social amoeba)).